The sequence spans 383 residues: Dual-specificity RNA methyltransferase RlmN (383 aa).

Glutamate 95 functions as the Proton acceptor in the catalytic mechanism. Residues glutamate 101–aspartate 349 enclose the Radical SAM core domain. Cysteine 108 and cysteine 354 are disulfide-bonded. [4Fe-4S] cluster-binding residues include cysteine 115, cysteine 119, and cysteine 122. S-adenosyl-L-methionine-binding positions include glycine 180–glutamate 181, serine 212, serine 234–histidine 236, and asparagine 311. Cysteine 354 (S-methylcysteine intermediate) is an active-site residue.

The protein belongs to the radical SAM superfamily. RlmN family. [4Fe-4S] cluster serves as cofactor.

The protein localises to the cytoplasm. The enzyme catalyses adenosine(2503) in 23S rRNA + 2 reduced [2Fe-2S]-[ferredoxin] + 2 S-adenosyl-L-methionine = 2-methyladenosine(2503) in 23S rRNA + 5'-deoxyadenosine + L-methionine + 2 oxidized [2Fe-2S]-[ferredoxin] + S-adenosyl-L-homocysteine. It catalyses the reaction adenosine(37) in tRNA + 2 reduced [2Fe-2S]-[ferredoxin] + 2 S-adenosyl-L-methionine = 2-methyladenosine(37) in tRNA + 5'-deoxyadenosine + L-methionine + 2 oxidized [2Fe-2S]-[ferredoxin] + S-adenosyl-L-homocysteine. Functionally, specifically methylates position 2 of adenine 2503 in 23S rRNA and position 2 of adenine 37 in tRNAs. m2A2503 modification seems to play a crucial role in the proofreading step occurring at the peptidyl transferase center and thus would serve to optimize ribosomal fidelity. This chain is Dual-specificity RNA methyltransferase RlmN, found in Paraburkholderia xenovorans (strain LB400).